Here is a 404-residue protein sequence, read N- to C-terminus: NADH-quinone oxidoreductase subunit D (404 aa).

This sequence belongs to the complex I 49 kDa subunit family. As to quaternary structure, NDH-1 is composed of 14 different subunits. Subunits NuoB, C, D, E, F, and G constitute the peripheral sector of the complex.

Its subcellular location is the cell inner membrane. The catalysed reaction is a quinone + NADH + 5 H(+)(in) = a quinol + NAD(+) + 4 H(+)(out). Its function is as follows. NDH-1 shuttles electrons from NADH, via FMN and iron-sulfur (Fe-S) centers, to quinones in the respiratory chain. The immediate electron acceptor for the enzyme in this species is believed to be ubiquinone. Couples the redox reaction to proton translocation (for every two electrons transferred, four hydrogen ions are translocated across the cytoplasmic membrane), and thus conserves the redox energy in a proton gradient. In Leptospira borgpetersenii serovar Hardjo-bovis (strain JB197), this protein is NADH-quinone oxidoreductase subunit D.